Here is a 100-residue protein sequence, read N- to C-terminus: Integration host factor subunit alpha (100 aa).

It belongs to the bacterial histone-like protein family. Heterodimer of an alpha and a beta chain.

This protein is one of the two subunits of integration host factor, a specific DNA-binding protein that functions in genetic recombination as well as in transcriptional and translational control. This is Integration host factor subunit alpha from Phenylobacterium zucineum (strain HLK1).